The sequence spans 430 residues: Serine hydroxymethyltransferase (430 aa).

Residue 120–122 (GHI) participates in (6S)-5,6,7,8-tetrahydrofolate binding. The residue at position 226 (Lys226) is an N6-(pyridoxal phosphate)lysine.

This sequence belongs to the SHMT family. Homodimer. It depends on pyridoxal 5'-phosphate as a cofactor.

The protein localises to the cytoplasm. The protein operates within amino-acid biosynthesis; glycine biosynthesis; glycine from L-serine: step 1/1. Its function is as follows. Catalyzes the reversible interconversion of serine and glycine with a modified folate serving as the one-carbon carrier. Also exhibits a pteridine-independent aldolase activity toward beta-hydroxyamino acids, producing glycine and aldehydes, via a retro-aldol mechanism. This chain is Serine hydroxymethyltransferase, found in Pyrobaculum aerophilum (strain ATCC 51768 / DSM 7523 / JCM 9630 / CIP 104966 / NBRC 100827 / IM2).